The primary structure comprises 410 residues: Zinc finger protein 322 (410 aa).

C2H2-type zinc fingers lie at residues 81 to 103, 109 to 131, 137 to 159, 165 to 187, 193 to 215, 221 to 243, 249 to 271, and 277 to 299; these read YRCD…QRIH, YKCS…QRTH, YTCD…QRSH, YLCN…RRTH, FKCL…QRTH, YKCN…KRVH, YKCG…QRVH, and YKCL…QATH. The C2H2-type 9; degenerate zinc-finger motif lies at 303–325; the sequence is FKCLEYEKSFNCSSDFIVHQRIH. The C2H2-type 10; degenerate zinc-finger motif lies at 361-383; sequence YKYSVCDKTFHHSSALLQHQTVH. Serine 400 bears the Phosphoserine mark.

The protein belongs to the krueppel C2H2-type zinc-finger protein family. As to quaternary structure, interacts with POU5F1.

It localises to the nucleus. The protein localises to the cytoplasm. Its function is as follows. Transcriptional activator. Important for maintenance of pluripotency in embryonic stem cells. Binds directly to the POU5F1 distal enhancer and the NANOG proximal promoter, and enhances expression of both genes. Can also bind to numerous other gene promoters and regulates expression of many other pluripotency factors, either directly or indirectly. Promotes inhibition of MAPK signaling during embryonic stem cell differentiation. This Mus musculus (Mouse) protein is Zinc finger protein 322 (Znf322).